A 253-amino-acid polypeptide reads, in one-letter code: Homeotic protein ultrabithorax (253 aa).

The segment covering 125 to 141 (GNTSNGSNAPNAANGQN) has biased composition (low complexity). Residues 125 to 193 (GNTSNGSNAP…GNGTAGGVPQ (69 aa)) form a disordered region. A compositionally biased stretch (gly residues) spans 176–189 (RGGGSAGGGNGTAG). Positions 237 to 242 (FYPWMA) match the Antp-type hexapeptide motif.

This sequence belongs to the Antp homeobox family.

It localises to the nucleus. In terms of biological role, sequence-specific transcription factor which is part of a developmental regulatory system that provides cells with specific positional identities on the anterior-posterior axis. Binds the consensus region 5'-TTAAT[GT][GA]-3'. This homeotic protein controls development of the cells in the posterior thoracic and first abdominal segments. It activates the synthesis of the decapentaplegic (DPP) growth factor. The chain is Homeotic protein ultrabithorax (Ubx) from Drosophila funebris (Fruit fly).